The primary structure comprises 488 residues: Glutamate synthase [NADPH] small chain (488 aa).

In terms of domain architecture, 4Fe-4S ferredoxin-type spans 38–69 (ESLRQQATRCMDCGIPFCHNGCPLGNLIPEWN).

Requires [4Fe-4S] cluster as cofactor.

It carries out the reaction 2 L-glutamate + NADP(+) = L-glutamine + 2-oxoglutarate + NADPH + H(+). Its pathway is amino-acid biosynthesis; L-glutamate biosynthesis via GLT pathway; L-glutamate from 2-oxoglutarate and L-glutamine (NADP(+) route): step 1/1. In Mycobacterium tuberculosis (strain CDC 1551 / Oshkosh), this protein is Glutamate synthase [NADPH] small chain (gltD).